A 542-amino-acid chain; its full sequence is NXPE family member 4 (542 aa).

The N-terminal stretch at 1–26 is a signal peptide; that stretch reads MKMMASRKSLWVLLFIVIFWISFTVF. N91, N92, N159, and N223 each carry an N-linked (GlcNAc...) asparagine glycan.

The protein belongs to the NXPE family.

Its subcellular location is the secreted. The protein is NXPE family member 4 (Nxpe4) of Rattus norvegicus (Rat).